Consider the following 477-residue polypeptide: Diacylglycerol O-acyltransferase 1-2 (477 aa).

The disordered stretch occupies residues 1-48 (MAPPPSLAPDRGGGEPDDALRLRARAAAAAGDAPAPQQQQEQRHQEQQ). Positions 12-21 (GGGEPDDALR) are enriched in basic and acidic residues. Positions 25–40 (RAAAAAGDAPAPQQQQ) are enriched in low complexity. The next 7 membrane-spanning stretches (helical) occupy residues 79 to 99 (HAGL…RLII), 123 to 143 (WPLL…LMVE), 155 to 175 (VVIL…VVVI), 182 to 202 (VLSG…LVSF), 230 to 250 (NIKW…TLCY), 263 to 283 (GWVV…GFII), and 319 to 339 (VWLC…AELL). An FYXDWWN motif motif is present at residues 346 to 352 (FYKDWWN). Transmembrane regions (helical) follow at residues 387–407 (GVAI…CVAV), 409–429 (CHIF…LVFL), and 442–462 (VGNM…CVLL). His401 is an active-site residue.

Belongs to the membrane-bound acyltransferase family. Sterol o-acyltransferase subfamily.

It localises to the endoplasmic reticulum membrane. The catalysed reaction is an acyl-CoA + a 1,2-diacyl-sn-glycerol = a triacyl-sn-glycerol + CoA. Its pathway is glycerolipid metabolism; triacylglycerol biosynthesis. Functionally, involved in triacylglycerol (TAG) synthesis. Catalyzes the acylation of the sn-3 hydroxy group of sn-1,2-diacylglycerol using acyl-CoA. The polypeptide is Diacylglycerol O-acyltransferase 1-2 (Oryza sativa subsp. japonica (Rice)).